A 263-amino-acid polypeptide reads, in one-letter code: MELQLLNTLRNHNPIVFNIANFVTVQDVANGLNALGASPIMSAEVQEAETMVQIAGAVCINLGTLTTTQIDQMRVVGKLANQYHKPVVLDPVAVGAVPYRKEVALALLSDFQVDVIRGNAGEIAALAGMDWQAKGIDAGSGQGDLVEIAQACAQQFQCCVILSGPTDVITDGQRVVKVANGTPLFQRHVGSGDLLSSIVAAFTAVSPTDVYQAAQVACLVLAGAGELVASQLTADRPATFAIDLIDRLSLVTVSEIQTIAKVD.

Methionine 41 lines the substrate pocket. Residues arginine 117 and serine 163 each contribute to the ATP site. Residue glycine 190 coordinates substrate.

The protein belongs to the Thz kinase family. Mg(2+) serves as cofactor.

It catalyses the reaction 5-(2-hydroxyethyl)-4-methylthiazole + ATP = 4-methyl-5-(2-phosphooxyethyl)-thiazole + ADP + H(+). It participates in cofactor biosynthesis; thiamine diphosphate biosynthesis; 4-methyl-5-(2-phosphoethyl)-thiazole from 5-(2-hydroxyethyl)-4-methylthiazole: step 1/1. Functionally, catalyzes the phosphorylation of the hydroxyl group of 4-methyl-5-beta-hydroxyethylthiazole (THZ). The protein is Hydroxyethylthiazole kinase of Lactiplantibacillus plantarum (strain ATCC BAA-793 / NCIMB 8826 / WCFS1) (Lactobacillus plantarum).